The following is a 237-amino-acid chain: Aliphatic sulfonates import ATP-binding protein SsuB 1 (237 aa).

Residues 5 to 221 (LMNIRVDRKA…PRDRRDPLLA (217 aa)) enclose the ABC transporter domain. 38 to 45 (GPSGCGKS) is an ATP binding site.

Belongs to the ABC transporter superfamily. Aliphatic sulfonates importer (TC 3.A.1.17.2) family. As to quaternary structure, the complex is composed of two ATP-binding proteins (SsuB), two transmembrane proteins (SsuC) and a solute-binding protein (SsuA).

The protein resides in the cell inner membrane. The enzyme catalyses ATP + H2O + aliphatic sulfonate-[sulfonate-binding protein]Side 1 = ADP + phosphate + aliphatic sulfonateSide 2 + [sulfonate-binding protein]Side 1.. Its function is as follows. Part of the ABC transporter complex SsuABC involved in aliphatic sulfonates import. Responsible for energy coupling to the transport system. This Pseudomonas savastanoi pv. phaseolicola (strain 1448A / Race 6) (Pseudomonas syringae pv. phaseolicola (strain 1448A / Race 6)) protein is Aliphatic sulfonates import ATP-binding protein SsuB 1.